The chain runs to 297 residues: Probable tyrosine phosphatase protein J2 (297 aa).

One can recognise a Tyrosine-protein phosphatase domain in the interval 21 to 286 (DSLSCIIQEY…VFCYHLIHAY (266 aa)). Residue C227 is the Phosphocysteine intermediate of the active site.

It belongs to the protein-tyrosine phosphatase family.

It carries out the reaction O-phospho-L-tyrosyl-[protein] + H2O = L-tyrosyl-[protein] + phosphate. The protein is Probable tyrosine phosphatase protein J2 (J3) of Microplitis demolitor (Parasitoid wasp).